The following is a 606-amino-acid chain: Ribonucleoprotein PTB-binding 1 (606 aa).

A disordered region spans residues 1–41 (MAADVSVTHRPPLSPKSGAEVEAGDAAERRAPEEELPPLDP). Residue alanine 2 is modified to N-acetylalanine. Residues serine 6 and serine 14 each carry the phosphoserine modification. A Nuclear localization signal motif is present at residues 45–60 (RKRLEHTERQFRNRRK). 3 consecutive RRM domains span residues 59–130 (RKIL…LQPT), 132–210 (ALLC…WTDA), and 221–299 (RCLC…FCAP). Positions 307–395 (LAALIAAQAT…QTQGQKKPGI (89 aa)) are interaction with PTBP1. Residues 391–474 (KKPGILGDSP…PPAPVGLRGS (84 aa)) form a disordered region. Low complexity predominate over residues 453–462 (LGLGPPAAQL). Threonine 463 carries the phosphothreonine modification. The residue at position 474 (serine 474) is a Phosphoserine. Position 488 is a phosphothreonine (proline 488). Positions 519–564 (GLLGLSPGPNGHSHLLKVRAGGGDMQGWEAPAPQRPLTRPALPSVS) are disordered. 2 positions are modified to phosphoserine: serine 562 and histidine 567. Residues 579 to 606 (CPRPSPAQKAAMWASTPRASAATTRTPT) form a disordered region. The segment covering 592–606 (ASTPRASAATTRTPT) has biased composition (low complexity).

In terms of assembly, interacts with PTBP1, RAVER2, VCL and ACTN1. Part of a complex containing RAVER1, VCL and ACTN1.

It localises to the nucleus. It is found in the cytoplasm. Cooperates with PTBP1 to modulate regulated alternative splicing events. Promotes exon skipping. Cooperates with PTBP1 to modulate switching between mutually exclusive exons during maturation of the TPM1 pre-mRNA. The sequence is that of Ribonucleoprotein PTB-binding 1 (RAVER1) from Homo sapiens (Human).